Here is a 585-residue protein sequence, read N- to C-terminus: Amyloid protein-binding protein 2 (585 aa).

TPR repeat units follow at residues Gln50–Phe83, Ile120–His153, Ala206–Gly239, Ser288–Val321, His333–Ile367, Ala429–Leu462, Ala471–Leu505, and Glu514–Arg547.

Component of a CRL2 E3 ubiquitin-protein ligase complex, also named ECS (Elongin BC-CUL2/5-SOCS-box protein) complex, composed of CUL2, Elongin BC (ELOB and ELOC), RBX1 and substrate-specific adapter APPBP2. Interacts with APP; APP interaction inhibits the E3 ubiquitin-protein ligase activity of the CRL2(APPBP2) complex. In terms of processing, rapidly degraded by the proteasome upon overexpression of a C-terminal fragment of APP.

It localises to the nucleus. It is found in the cytoplasm. The protein resides in the cytoskeleton. The protein localises to the membrane. It participates in protein modification; protein ubiquitination. Its activity is regulated as follows. E3 ubiquitin-protein ligase activity of the CRL2(APPBP2) complex is inhibited by APP. Substrate-recognition component of a Cul2-RING (CRL2) E3 ubiquitin-protein ligase complex of the DesCEND (destruction via C-end degrons) pathway, which recognizes a C-degron located at the extreme C terminus of target proteins, leading to their ubiquitination and degradation. The C-degron recognized by the DesCEND pathway is usually a motif of less than ten residues and can be present in full-length proteins, truncated proteins or proteolytically cleaved forms. The CRL2(APPBP2) complex specifically recognizes proteins with a -Arg-Xaa-Xaa-Gly degron at the C-terminus, leading to their ubiquitination and degradation. The CRL2(APPBP2) complex mediates ubiquitination and degradation of truncated SELENOV selenoproteins produced by failed UGA/Sec decoding, which end with a -Arg-Xaa-Xaa-Gly degron. May play a role in intracellular protein transport: may be involved in the translocation of APP along microtubules toward the cell surface. The sequence is that of Amyloid protein-binding protein 2 from Rattus norvegicus (Rat).